The following is a 95-amino-acid chain: Small ribosomal subunit protein uS19 (95 aa).

It belongs to the universal ribosomal protein uS19 family.

Its function is as follows. Protein S19 forms a complex with S13 that binds strongly to the 16S ribosomal RNA. The protein is Small ribosomal subunit protein uS19 of Thermosipho africanus (strain TCF52B).